An 866-amino-acid chain; its full sequence is Fibrinogen alpha chain (866 aa).

The first 19 residues, 1 to 19, serve as a signal peptide directing secretion; it reads MFSMRIVCLVLSVVGTAWT. Serine 22 carries the phosphoserine modification. Residues 36–38 form an alpha-chain polymerization, binding distal domain of another fibrin gamma chain region; the sequence is GPR. Serine 45 is modified (phosphoserine; by FAM20C). A Phosphoserine modification is found at serine 50. Serine 56 is modified (phosphoserine; by FAM20C). The stretch at 68-631 forms a coiled coil; sequence CRMKGLIDEV…GHAKSRPVRD (564 aa). The segment at 262-460 is disordered; sequence ERPGGNEITR…SGSTTTTRRS (199 aa). Residues 270–299 are compositionally biased toward low complexity; the sequence is TRGGSTSYGTGSETESPRNPSSAGSWNSGS. 3 positions are modified to phosphoserine: serine 281, serine 291, and serine 294. The O-linked (GalNAc...) threonine glycan is linked to threonine 320. Residue lysine 322 forms an Isoglutamyl lysine isopeptide (Lys-Gln) (interchain with Q-41 in alpha-2-antiplasmin) linkage. Glutamine 347 is covalently cross-linked (Isoglutamyl lysine isopeptide (Gln-Lys) (interchain with K-?)). Residue serine 351 is glycosylated (O-linked (GalNAc...) serine). Polar residues predominate over residues 354 to 391; that stretch reads PGSTGTWNPGSSERGSAGHWTSESSVSGSTGQWHSESG. At serine 364 the chain carries Phosphoserine; by FAM20C. Glutamine 385 participates in a covalent cross-link: Isoglutamyl lysine isopeptide (Gln-Lys) (interchain with K-?). Threonine 412 carries the phosphothreonine modification. Positions 424-449 are enriched in basic and acidic residues; it reads TRREYHTEKLVTSKGDKELRTGKEKV. Low complexity predominate over residues 450–460; the sequence is TSGSTTTTRRS. Serine 451 bears the Phosphoserine mark. An N-linked (GlcNAc...) asparagine; in variant Caracas-2 glycan is attached at serine 453. Cysteine 461 and cysteine 491 are disulfide-bonded. Serine 501 is subject to Phosphoserine. Threonine 505 is modified (phosphothreonine). Serine 524 carries the phosphoserine; by FAM20C modification. Residues lysine 527 and lysine 558 each participate in an isoglutamyl lysine isopeptide (Lys-Gln) (interchain with Q-?) cross-link. The segment at 543 to 638 is disordered; it reads ETESRGSESG…VRDCDDVLQT (96 aa). Serine 560 is modified (phosphoserine; by FAM20C). A 4-hydroxyproline; by P4HA1 modification is found at proline 565. Isoglutamyl lysine isopeptide (Lys-Gln) (interchain with Q-?) cross-links involve residues lysine 575, lysine 581, and lysine 599. Residues 575 to 589 show a composition bias toward low complexity; it reads KSSSYSKQFTSSTSY. The segment covering 594–617 has biased composition (basic and acidic residues); sequence STFESKSYKMADEAGSEADHEGTH. The residue at position 609 (serine 609) is a Phosphoserine; by FAM20C. A compositionally biased stretch (basic residues) spans 618–627; the sequence is STKRGHAKSR. The Fibrinogen C-terminal domain occupies 623-864; the sequence is HAKSRPVRDC…AVRMKIRPLV (242 aa). N-linked (GlcNAc...) asparagine glycosylation occurs at asparagine 686. The Ca(2+) site is built by aspartate 791, aspartate 793, tryptophan 795, and glutamate 797. A disulfide bridge connects residues cysteine 799 and cysteine 812.

As to quaternary structure, heterohexamer; disulfide linked. Contains 2 sets of 3 non-identical chains (alpha, beta and gamma). The 2 heterotrimers are in head to head conformation with the N-termini in a small central domain. In terms of assembly, (Microbial infection) Interacts with Staphylococcus aureus protein Fib; this interaction inhibits fibrinogen-dependent platelet aggregation and protects the bacteria form phagocytosis. Post-translationally, the alpha chain is normally not N-glycosylated, even though glycosylation at Asn-686 was observed when a fragment of the protein was expressed in insect cells. It is well known that heterologous expression of isolated domains can lead to adventitious protein modifications. Besides, glycosylation at Asn-686 is supported by large-scale glycoproteomics studies, but the evidence is still quite tenuous. Most likely, Asn-686 is not glycosylated in the healthy human body, or only with low efficiency. In terms of processing, O-glycosylated. Forms F13A-mediated cross-links between a glutamine and the epsilon-amino group of a lysine residue, forming fibronectin-fibrinogen heteropolymers. Post-translationally, about one-third of the alpha chains in the molecules in blood were found to be phosphorylated. In terms of processing, conversion of fibrinogen to fibrin is triggered by thrombin, which cleaves fibrinopeptides A and B from alpha and beta chains, and thus exposes the N-terminal polymerization sites responsible for the formation of the soft clot. The soft clot is converted into the hard clot by factor XIIIA which catalyzes the epsilon-(gamma-glutamyl)lysine cross-linking between gamma chains (stronger) and between alpha chains (weaker) of different monomers. Phosphorylated by FAM20C in the extracellular medium. As to expression, detected in blood plasma (at protein level).

Its subcellular location is the secreted. In terms of biological role, cleaved by the protease thrombin to yield monomers which, together with fibrinogen beta (FGB) and fibrinogen gamma (FGG), polymerize to form an insoluble fibrin matrix. Fibrin has a major function in hemostasis as one of the primary components of blood clots. In addition, functions during the early stages of wound repair to stabilize the lesion and guide cell migration during re-epithelialization. Was originally thought to be essential for platelet aggregation, based on in vitro studies using anticoagulated blood. However, subsequent studies have shown that it is not absolutely required for thrombus formation in vivo. Enhances expression of SELP in activated platelets via an ITGB3-dependent pathway. Maternal fibrinogen is essential for successful pregnancy. Fibrin deposition is also associated with infection, where it protects against IFNG-mediated hemorrhage. May also facilitate the immune response via both innate and T-cell mediated pathways. The protein is Fibrinogen alpha chain (FGA) of Homo sapiens (Human).